Reading from the N-terminus, the 79-residue chain is MAETKDLPFEEAMRQLEWLVEKLEEGNVPLEQAIDMFKEGMDLSQSCHEKLLKVEKQLDQIMHEDGELVEANLEEEANE.

It belongs to the XseB family. As to quaternary structure, heterooligomer composed of large and small subunits.

Its subcellular location is the cytoplasm. The enzyme catalyses Exonucleolytic cleavage in either 5'- to 3'- or 3'- to 5'-direction to yield nucleoside 5'-phosphates.. Functionally, bidirectionally degrades single-stranded DNA into large acid-insoluble oligonucleotides, which are then degraded further into small acid-soluble oligonucleotides. This is Exodeoxyribonuclease 7 small subunit from Shouchella clausii (strain KSM-K16) (Alkalihalobacillus clausii).